Here is a 615-residue protein sequence, read N- to C-terminus: Cysteine-rich receptor-like protein kinase 1 (615 aa).

The first 28 residues, 1–28 (MQICASIAQFLAWVSFLVLLATVGSSSS), serve as a signal peptide directing secretion. Gnk2-homologous domains are found at residues 29 to 131 (SESL…DRDF) and 137 to 237 (DPTF…THKF). Topologically, residues 29-266 (SESLLNCQPL…SFFPHLSDRD (238 aa)) are extracellular. N-linked (GlcNAc...) asparagine glycans are attached at residues Asn-100 and Asn-165. Residues 267–287 (VTRLAIAAISLSILTSLGAFI) traverse the membrane as a helical segment. At 288 to 615 (SYRRVSRKRK…VLMPDEETRV (328 aa)) the chain is on the cytoplasmic side. One can recognise a Protein kinase domain in the interval 318–602 (FHDSMKLGQG…FEYPKQPPFL (285 aa)). ATP contacts are provided by residues 324-332 (LGQGGAGSV) and Lys-346. Asp-443 functions as the Proton acceptor in the catalytic mechanism.

Belongs to the protein kinase superfamily. Ser/Thr protein kinase family. CRK subfamily. As to expression, expressed in the whole plant at low levels.

The protein localises to the membrane. The enzyme catalyses L-seryl-[protein] + ATP = O-phospho-L-seryl-[protein] + ADP + H(+). It carries out the reaction L-threonyl-[protein] + ATP = O-phospho-L-threonyl-[protein] + ADP + H(+). This Arabidopsis thaliana (Mouse-ear cress) protein is Cysteine-rich receptor-like protein kinase 1.